We begin with the raw amino-acid sequence, 166 residues long: NAD(P)H-quinone oxidoreductase subunit I, chloroplastic (166 aa).

4Fe-4S ferredoxin-type domains lie at 55–84 and 95–124; these read GRIH…VDWK and LNYS…MTEE. [4Fe-4S] cluster contacts are provided by Cys-64, Cys-67, Cys-70, Cys-74, Cys-104, Cys-107, Cys-110, and Cys-114.

The protein belongs to the complex I 23 kDa subunit family. In terms of assembly, NDH is composed of at least 16 different subunits, 5 of which are encoded in the nucleus. The cofactor is [4Fe-4S] cluster.

The protein resides in the plastid. Its subcellular location is the chloroplast thylakoid membrane. It carries out the reaction a plastoquinone + NADH + (n+1) H(+)(in) = a plastoquinol + NAD(+) + n H(+)(out). It catalyses the reaction a plastoquinone + NADPH + (n+1) H(+)(in) = a plastoquinol + NADP(+) + n H(+)(out). In terms of biological role, NDH shuttles electrons from NAD(P)H:plastoquinone, via FMN and iron-sulfur (Fe-S) centers, to quinones in the photosynthetic chain and possibly in a chloroplast respiratory chain. The immediate electron acceptor for the enzyme in this species is believed to be plastoquinone. Couples the redox reaction to proton translocation, and thus conserves the redox energy in a proton gradient. This is NAD(P)H-quinone oxidoreductase subunit I, chloroplastic from Polymnia canadensis (White-flowered leaf-cup).